We begin with the raw amino-acid sequence, 181 residues long: ATP-dependent protease subunit HslV (181 aa).

Residue threonine 2 is part of the active site. Na(+)-binding residues include glycine 157, cysteine 160, and threonine 163.

This sequence belongs to the peptidase T1B family. HslV subfamily. As to quaternary structure, a double ring-shaped homohexamer of HslV is capped on each side by a ring-shaped HslU homohexamer. The assembly of the HslU/HslV complex is dependent on binding of ATP.

The protein localises to the cytoplasm. It carries out the reaction ATP-dependent cleavage of peptide bonds with broad specificity.. Its activity is regulated as follows. Allosterically activated by HslU binding. Protease subunit of a proteasome-like degradation complex believed to be a general protein degrading machinery. In Hahella chejuensis (strain KCTC 2396), this protein is ATP-dependent protease subunit HslV.